Consider the following 282-residue polypeptide: MGSRFRTTVLLAALTALIIWIGGAVGGSHGMMIAFVLALVMNVGSYWFSDKIVLAMYRAQPLSEADAPQIYRIVRELSASANLPMPRVYLIPESAPNAFATGRNPENAVIAVTEGLWRILTPDEIRGVLAHELAHVKNRDILVSSIAATLAGVVMILARMAQWGALFGGGRSSSDEDSGGGMLGLVVTAILAPIAAMLIQLAISRSREYLADETGAAFSHNPESLARALEKLAMASHQNPMEDASPSTAHLFIVNPLSGRSLANLFSTHPPIEERIRRLRSM.

The next 2 helical transmembrane spans lie at 7–26 (TTVLLAALTALIIWIGGAVG) and 30–49 (GMMIAFVLALVMNVGSYWFS). His-131 provides a ligand contact to Zn(2+). Glu-132 is an active-site residue. His-135 contributes to the Zn(2+) binding site. 2 helical membrane passes run 141–161 (ILVSSIAATLAGVVMILARMA) and 183–203 (LGLVVTAILAPIAAMLIQLAI). Glu-208 serves as a coordination point for Zn(2+).

It belongs to the peptidase M48B family. Zn(2+) is required as a cofactor.

It localises to the cell inner membrane. This Syntrophobacter fumaroxidans (strain DSM 10017 / MPOB) protein is Protease HtpX homolog.